The primary structure comprises 152 residues: Large ribosomal subunit protein bL9 (152 aa).

Belongs to the bacterial ribosomal protein bL9 family.

Its function is as follows. Binds to the 23S rRNA. This Pelagibacter ubique (strain HTCC1062) protein is Large ribosomal subunit protein bL9.